A 356-amino-acid polypeptide reads, in one-letter code: Biotin synthase (356 aa).

The Radical SAM core domain maps to 51–270 (NKVQCNQLLN…IALARIMMPL (220 aa)). [4Fe-4S] cluster contacts are provided by Cys-66, Cys-70, and Cys-73. The [2Fe-2S] cluster site is built by Cys-110, Cys-141, Cys-201, and Arg-274. Residues 310-356 (PGDNKDRSLFDRLGLEPRDDHGVHEHSSHSHTHDQGHDHGPHGHSHG) form a disordered region. The span at 312–350 (DNKDRSLFDRLGLEPRDDHGVHEHSSHSHTHDQGHDHGP) shows a compositional bias: basic and acidic residues.

This sequence belongs to the radical SAM superfamily. Biotin synthase family. As to quaternary structure, homodimer. [4Fe-4S] cluster is required as a cofactor. [2Fe-2S] cluster serves as cofactor.

It catalyses the reaction (4R,5S)-dethiobiotin + (sulfur carrier)-SH + 2 reduced [2Fe-2S]-[ferredoxin] + 2 S-adenosyl-L-methionine = (sulfur carrier)-H + biotin + 2 5'-deoxyadenosine + 2 L-methionine + 2 oxidized [2Fe-2S]-[ferredoxin]. The protein operates within cofactor biosynthesis; biotin biosynthesis; biotin from 7,8-diaminononanoate: step 2/2. Functionally, catalyzes the conversion of dethiobiotin (DTB) to biotin by the insertion of a sulfur atom into dethiobiotin via a radical-based mechanism. The chain is Biotin synthase from Rhodopseudomonas palustris (strain BisB18).